The following is a 311-amino-acid chain: MNKYDLIERMNTRFAELEVTLHQLHQQLDDLPLIAARVFSLPEIEKGTEHQPIEQITVNITEGEHAKRLGLQHFQRLFLHHQGQHVSSKAALRLPGVLCFSVTDKELIECQDIIKKTNQLKAELEHIITVESGLPSEQRFEFVHTHLHGLITLNTYRTITPLINPSSVRFGWANKHIIKNVTREDILLQLEKSLNAGRAVPPFTREQWRELISLEINDVQRLPEKTRLKIKRPVKVQPIARVWYQEQQKQVQHPCPMPLIAFCQRQSGAELPKLGELTDYDVKHIKHKYKPDAKPLRLLVPRLHLYVELEP.

This sequence belongs to the Tus family.

It localises to the cytoplasm. Its function is as follows. Trans-acting protein required for termination of DNA replication. Binds to DNA replication terminator sequences (terA to terF) to prevent the passage of replication forks. The termination efficiency will be affected by the affinity of this protein for the terminator sequence. This chain is DNA replication terminus site-binding protein, found in Yersinia pseudotuberculosis serotype I (strain IP32953).